Consider the following 244-residue polypeptide: ATP synthase subunit a (244 aa).

6 helical membrane passes run 25-45, 85-105, 115-135, 144-164, 193-213, and 216-236; these read ISFT…LLIF, YFAF…FGMI, IIVT…IGFM, LFVP…IEII, GFVI…SVAL, and LEIL…CIYL.

Belongs to the ATPase A chain family. In terms of assembly, F-type ATPases have 2 components, CF(1) - the catalytic core - and CF(0) - the membrane proton channel. CF(1) has five subunits: alpha(3), beta(3), gamma(1), delta(1), epsilon(1). CF(0) has three main subunits: a(1), b(2) and c(9-12). The alpha and beta chains form an alternating ring which encloses part of the gamma chain. CF(1) is attached to CF(0) by a central stalk formed by the gamma and epsilon chains, while a peripheral stalk is formed by the delta and b chains.

The protein localises to the cell inner membrane. Its function is as follows. Key component of the proton channel; it plays a direct role in the translocation of protons across the membrane. The polypeptide is ATP synthase subunit a (Pelagibacter ubique (strain HTCC1062)).